A 423-amino-acid chain; its full sequence is uncharacterized protein (423 aa).

The protein belongs to the mycobacterial PPE family.

Its function is as follows. Could be required for host endothelial-cell invasion and/or intracellular survival. This is an uncharacterized protein from Mycobacterium tuberculosis (strain CDC 1551 / Oshkosh).